The following is a 400-amino-acid chain: Bifunctional arginine demethylase and lysyl-hydroxylase psr-1 (400 aa).

The region spanning 146 to 310 is the JmjC domain; that stretch reads RKTKKLSEDY…LVWPKTVKGR (165 aa). Position 189 (Thr-189) interacts with substrate. The Fe cation site is built by His-192 and Asp-194. Asn-202 contributes to the 2-oxoglutarate binding site. Position 209 (Lys-209) interacts with substrate. His-278 provides a ligand contact to Fe cation. A 2-oxoglutarate-binding site is contributed by Thr-290. Positions 342 to 400 are disordered; the sequence is DMNESSSDSSSSSSSSDDSSDESDCDDSGRCGGRKRKNDDRSNECPEKMSTTYFQNSLV. The segment covering 346–358 has biased composition (low complexity); the sequence is SSSDSSSSSSSSD. Residues 378 to 388 are compositionally biased toward basic and acidic residues; it reads KNDDRSNECPE. A compositionally biased stretch (polar residues) spans 390–400; sequence MSTTYFQNSLV.

Belongs to the JMJD6 family. As to quaternary structure, interacts with ced-5 and ced-12. Fe(2+) serves as cofactor.

Its subcellular location is the nucleus. Its function is as follows. Dioxygenase that can both act as a histone arginine demethylase and a lysyl-hydroxylase. The sequence is that of Bifunctional arginine demethylase and lysyl-hydroxylase psr-1 (psr-1) from Caenorhabditis elegans.